We begin with the raw amino-acid sequence, 418 residues long: Ankyrin repeat and SOCS box protein 6 (418 aa).

ANK repeat units lie at residues 65–95, 100–129, 134–164, 168–203, 224–253, and 258–287; these read EGVS…NLNF, TYYT…DINR, HESS…DVNA, NGKT…DVKA, CGDK…DPSE, and ESLT…AYNC. Residues 358 to 413 form the SOCS box domain; sequence ALHASLRQLESYPPPLKHLCRVSIRLCLRPWPVDTKVKALPLPDRLKWYLLSAHSD.

The protein belongs to the ankyrin SOCS box (ASB) family. Binds APS. Identified in a complex with ELOB and ELOC. Interacts with CUL5 and RNF7. Interacts with SQSTM1. In terms of tissue distribution, detected in adipocytes.

The protein resides in the cytoplasm. The protein operates within protein modification; protein ubiquitination. Functionally, probable substrate-recognition component of a SCF-like ECS (Elongin-Cullin-SOCS-box protein) E3 ubiquitin-protein ligase complex which mediates the ubiquitination and subsequent proteasomal degradation of target proteins. May play a role in the regulation of cell proliferation and autophagy by promoting the ubiquitination and degradation of SQSTM1. The polypeptide is Ankyrin repeat and SOCS box protein 6 (Asb6) (Mus musculus (Mouse)).